A 198-amino-acid chain; its full sequence is uncharacterized protein (198 aa).

Residues 20-58 adopt a coiled-coil conformation; sequence ERVRRDEELARLSADKEQAKNDLEESKRRIARLRGTVYE. Residues 144–198 are disordered; that stretch reads LSNRKTKNPESDRRRQSRKKKSTQIQASDEMKHRRHHVHKVHHYSQKQSSSTTRR. Basic residues predominate over residues 176–188; sequence HRRHHVHKVHHYS. Positions 189–198 are enriched in polar residues; the sequence is QKQSSSTTRR.

It localises to the nucleus. The protein resides in the nucleolus. This is an uncharacterized protein from Schizosaccharomyces pombe (strain 972 / ATCC 24843) (Fission yeast).